The sequence spans 183 residues: DNA-directed RNA polymerase subunit Rpo7 (183 aa).

Residues 82–164 enclose the S1 motif domain; the sequence is HEVIEGEVSQ…RLPRIALTMK (83 aa).

The protein belongs to the eukaryotic RPB7/RPC8 RNA polymerase subunit family. Part of the 13-subunit RNA polymerase complex. Forms a stalk with Rpo4 that extends from the main structure.

It localises to the cytoplasm. It carries out the reaction RNA(n) + a ribonucleoside 5'-triphosphate = RNA(n+1) + diphosphate. Its function is as follows. DNA-dependent RNA polymerase (RNAP) catalyzes the transcription of DNA into RNA using the four ribonucleoside triphosphates as substrates. Functionally, reconstitution experiments show this subunit is required for basic activity. This Sulfolobus acidocaldarius (strain ATCC 33909 / DSM 639 / JCM 8929 / NBRC 15157 / NCIMB 11770) protein is DNA-directed RNA polymerase subunit Rpo7.